The following is a 106-amino-acid chain: Large ribosomal subunit protein eL42 (106 aa).

Belongs to the eukaryotic ribosomal protein eL42 family.

The chain is Large ribosomal subunit protein eL42 (RPL44) from Eremothecium gossypii (strain ATCC 10895 / CBS 109.51 / FGSC 9923 / NRRL Y-1056) (Yeast).